We begin with the raw amino-acid sequence, 466 residues long: Ribulose bisphosphate carboxylase large chain (466 aa).

N6,N6,N6-trimethyllysine is present on Lys-5. 2 residues coordinate substrate: Asn-114 and Thr-164. The active-site Proton acceptor is the Lys-166. Substrate is bound at residue Lys-168. Residues Lys-192, Asp-194, and Glu-195 each contribute to the Mg(2+) site. N6-carboxylysine is present on Lys-192. His-285 acts as the Proton acceptor in catalysis. The substrate site is built by Arg-286, His-318, and Ser-370.

This sequence belongs to the RuBisCO large chain family. Type I subfamily. Heterohexadecamer of 8 large chains and 8 small chains; disulfide-linked. The disulfide link is formed within the large subunit homodimers. It depends on Mg(2+) as a cofactor. Post-translationally, the disulfide bond which can form in the large chain dimeric partners within the hexadecamer appears to be associated with oxidative stress and protein turnover.

Its subcellular location is the plastid. The protein resides in the chloroplast. The catalysed reaction is 2 (2R)-3-phosphoglycerate + 2 H(+) = D-ribulose 1,5-bisphosphate + CO2 + H2O. The enzyme catalyses D-ribulose 1,5-bisphosphate + O2 = 2-phosphoglycolate + (2R)-3-phosphoglycerate + 2 H(+). Functionally, ruBisCO catalyzes two reactions: the carboxylation of D-ribulose 1,5-bisphosphate, the primary event in carbon dioxide fixation, as well as the oxidative fragmentation of the pentose substrate in the photorespiration process. Both reactions occur simultaneously and in competition at the same active site. The polypeptide is Ribulose bisphosphate carboxylase large chain (Coriaria myrtifolia (Tanner's sumac)).